The primary structure comprises 345 residues: Transcription initiation factor IIB (345 aa).

A TFIIB-type zinc finger spans residues Ile20–Ser53. Residues Cys24, Cys27, Cys45, and Cys48 each coordinate Zn(2+). Residues Thr65–Arg78 are compositionally biased toward basic and acidic residues. Positions Thr65–Ser93 are disordered. 2 tandem repeats follow at residues Leu136 to Asn212 and Phe242 to Glu318.

It belongs to the TFIIB family. Associates with TFIID-IIA (DA complex) to form TFIID-IIA-IIB (DAB-complex) which is then recognized by polymerase II.

It is found in the nucleus. Its function is as follows. General factor that plays a major role in the activation of eukaryotic genes transcribed by RNA polymerase II. This chain is Transcription initiation factor IIB (SUA7), found in Saccharomyces cerevisiae (strain ATCC 204508 / S288c) (Baker's yeast).